We begin with the raw amino-acid sequence, 393 residues long: Methylthioribose kinase (393 aa).

Residues N38, K53, and 107–109 (EDL) contribute to the ATP site. D225 provides a ligand contact to substrate. 242–244 (DPE) is an ATP binding site. R332 contributes to the substrate binding site.

It belongs to the methylthioribose kinase family. In terms of assembly, homodimer.

The catalysed reaction is 5-(methylsulfanyl)-D-ribose + ATP = 5-(methylsulfanyl)-alpha-D-ribose 1-phosphate + ADP + H(+). It functions in the pathway amino-acid biosynthesis; L-methionine biosynthesis via salvage pathway; S-methyl-5-thio-alpha-D-ribose 1-phosphate from S-methyl-5'-thioadenosine (hydrolase route): step 2/2. Catalyzes the phosphorylation of methylthioribose into methylthioribose-1-phosphate. This chain is Methylthioribose kinase, found in Bacillus cereus (strain AH187).